The following is a 379-amino-acid chain: UDP-N-acetylglucosamine--N-acetylmuramyl-(pentapeptide) pyrophosphoryl-undecaprenol N-acetylglucosamine transferase (379 aa).

UDP-N-acetyl-alpha-D-glucosamine is bound by residues 19 to 21 (TGG), asparagine 133, arginine 174, serine 207, isoleucine 261, and glutamine 306.

This sequence belongs to the glycosyltransferase 28 family. MurG subfamily.

The protein localises to the cell inner membrane. The enzyme catalyses di-trans,octa-cis-undecaprenyl diphospho-N-acetyl-alpha-D-muramoyl-L-alanyl-D-glutamyl-meso-2,6-diaminopimeloyl-D-alanyl-D-alanine + UDP-N-acetyl-alpha-D-glucosamine = di-trans,octa-cis-undecaprenyl diphospho-[N-acetyl-alpha-D-glucosaminyl-(1-&gt;4)]-N-acetyl-alpha-D-muramoyl-L-alanyl-D-glutamyl-meso-2,6-diaminopimeloyl-D-alanyl-D-alanine + UDP + H(+). Its pathway is cell wall biogenesis; peptidoglycan biosynthesis. In terms of biological role, cell wall formation. Catalyzes the transfer of a GlcNAc subunit on undecaprenyl-pyrophosphoryl-MurNAc-pentapeptide (lipid intermediate I) to form undecaprenyl-pyrophosphoryl-MurNAc-(pentapeptide)GlcNAc (lipid intermediate II). This Porphyromonas gingivalis (strain ATCC 33277 / DSM 20709 / CIP 103683 / JCM 12257 / NCTC 11834 / 2561) protein is UDP-N-acetylglucosamine--N-acetylmuramyl-(pentapeptide) pyrophosphoryl-undecaprenol N-acetylglucosamine transferase.